Consider the following 199-residue polypeptide: Ribonuclease HI (199 aa).

Positions M1–G68 are not required for RNase H activity. Positions R66–D197 constitute an RNase H type-1 domain. The as active as intact RNase H stretch occupies residues R69–A199. Mg(2+) is bound by residues D75, E115, D139, and D189. Mn(2+) is bound by residues D75, E115, D139, and D189.

It belongs to the RNase H family. The cofactor is Mn(2+). Mg(2+) is required as a cofactor. It depends on Co(2+) as a cofactor. Ni(2+) serves as cofactor.

The protein localises to the cytoplasm. It carries out the reaction Endonucleolytic cleavage to 5'-phosphomonoester.. Nuclease that specifically degrades the RNA of RNA-DNA hybrids; seems to act exonucleolytically on RNA/DNA hybrids. Endonucleolytically removes RNA primers from the Okazaki fragments of lagging strand synthesis on its own. Complements the temperature-sensitive phenotype of an E.coli double rnhA/rnhB (RNase H) disruption mutant. This chain is Ribonuclease HI (rnhA), found in Halobacterium salinarum (strain ATCC 700922 / JCM 11081 / NRC-1) (Halobacterium halobium).